Here is a 279-residue protein sequence, read N- to C-terminus: Small ribosomal subunit protein uS2 (279 aa).

Belongs to the universal ribosomal protein uS2 family. In terms of assembly, component of the small ribosomal subunit. Mature ribosomes consist of a small (40S) and a large (60S) subunit. The 40S subunit contains about 33 different proteins and 1 molecule of RNA (18S). The 60S subunit contains about 49 different proteins and 3 molecules of RNA (28S, 5.8S and 5S). Interacts with ribosomal protein S21.

The protein localises to the cytoplasm. In terms of biological role, required for the assembly and/or stability of the 40S ribosomal subunit. Required for the processing of the 20S rRNA-precursor to mature 18S rRNA in a late step of the maturation of 40S ribosomal subunits. The polypeptide is Small ribosomal subunit protein uS2 (Schistosoma japonicum (Blood fluke)).